The sequence spans 561 residues: Nephronectin (561 aa).

The N-terminal stretch at 1 to 19 (MAVLLAAVLASSLYLQVAA) is a signal peptide. In terms of domain architecture, EGF-like 1 spans 52-87 (SWGQCQPVCQPQCKHGECVGPNKCKCHPGFAGKTCN). 6 cysteine pairs are disulfide-bonded: cysteine 56-cysteine 69, cysteine 60-cysteine 75, cysteine 77-cysteine 86, cysteine 93-cysteine 104, cysteine 100-cysteine 113, and cysteine 115-cysteine 127. The EGF-like 2; calcium-binding domain occupies 89-128 (DLNECGLKPRPCKHRCMNTFGSYKCYCLNGYMLLPDGSCS). The EGF-like 3 domain occupies 132 to 168 (SCSMANCQYGCDVVKGQVRCQCPSPGLQLAPDGRTCV). In terms of domain architecture, EGF-like 4; calcium-binding spans 169 to 213 (DIDECATGRVSCPRFRQCVNTFGSYICKCHTGFDLMYIGGKYQCH). 6 cysteine pairs are disulfide-bonded: cysteine 173–cysteine 186, cysteine 180–cysteine 195, cysteine 197–cysteine 212, cysteine 218–cysteine 231, cysteine 225–cysteine 240, and cysteine 242–cysteine 253. In terms of domain architecture, EGF-like 5; calcium-binding spans 214–254 (DIDECSLGQHQCSSYARCYNIHGSYKCQCRDGYEGDGLNCV). Positions 266–370 (PIHMPERNGT…TSTTTRVITV (105 aa)) are disordered. Residues 307 to 316 (TNRPTSKPTT) show a composition bias toward low complexity. A compositionally biased stretch (pro residues) spans 317–348 (RPTPNPTPQPTPPPPPPLPTEPRTTPLPPTPE). Low complexity predominate over residues 352–366 (TRPTTIAPATSTTTR). The Integrin interaction motif lies at 382 to 384 (RGD). Residues 420-561 (HSCNFDHGLC…DDVSLKRGRC (142 aa)) form the MAM domain.

The protein belongs to the nephronectin family. In terms of assembly, homodimer and homotrimer. In terms of tissue distribution, expressed in kidney (at protein level).

The protein resides in the secreted. It is found in the extracellular space. It localises to the extracellular matrix. Functionally, functional ligand of integrin alpha-8/beta-1 in kidney development. Regulates the expression of GDNF with integrin alpha-8/beta-1 which is essential for kidney development. May also play a role in the development and function of various tissues, regulating cell adhesion, spreading and survival through the binding of several integrins. This is Nephronectin (Npnt) from Mus musculus (Mouse).